A 340-amino-acid polypeptide reads, in one-letter code: MDYQDAGVNIEAGRSFVDKIRRSVESTYNAQVLGGLGGFGGYFELPTGYENPVLVSGTDGVGTKLKIAQALNRHQTIGIDLVAMCVNDILTSGAKPLFFLDYLATGKLNPQQLSDVVTGIVEGCHLSDCALLGGETAEMPGFYGVGEYDVAGFCVGVVEKANLLDGSQINIGDVAIGLSSSGVHSNGFSLVRKIVEVNGLSWGDRFESLGNQTLGEVLLTPTQIYVKPILEALKSGIEIKGMAHITGGGLPENLPRCLNNNQSIKINSESWSILPIFQWIANMGNVATAAMFDTFNMGIGFVIIVPKNQGKTSIEWLKSQGISAYEIGEVIEGNRELVGL.

The protein belongs to the AIR synthase family.

The protein resides in the cytoplasm. The catalysed reaction is 2-formamido-N(1)-(5-O-phospho-beta-D-ribosyl)acetamidine + ATP = 5-amino-1-(5-phospho-beta-D-ribosyl)imidazole + ADP + phosphate + H(+). Its pathway is purine metabolism; IMP biosynthesis via de novo pathway; 5-amino-1-(5-phospho-D-ribosyl)imidazole from N(2)-formyl-N(1)-(5-phospho-D-ribosyl)glycinamide: step 2/2. The sequence is that of Phosphoribosylformylglycinamidine cyclo-ligase from Crocosphaera subtropica (strain ATCC 51142 / BH68) (Cyanothece sp. (strain ATCC 51142)).